We begin with the raw amino-acid sequence, 733 residues long: MENMAEEELLPLEKEEVEVAQVQVPTPARDSAGVPAPAPDSALDSAPTPASAPAPAPALAQAPALSPSLASAPEEAKSKRHISIQRQLADLENLAFVTDGNFDSASSLNSDNLDAGNRQACPLCPKEKFRACNSHKLRRHLQNLHWKVSVEFEGYRMCICHLPCRPVKPNIIGEQITSKMGAHYHCIICSATITRRTDMLGHVRRHMNKGETKSSYIAASTAKPPKEILKEADTDVQVCPNYSIPQKTDSYFNPKMKLNRQLIFCTLAALAEERKPLECLDAFGATGIMGLQWAKHLGNAVKVTINDLNENSVTLIQENCHLNKLKVVVDSKEKEKSDDILEEGEKNLGNIKVTKMDANVLMHLRSFDFIHLDPFGTSVNYLDSAFRNIRNLGIVSVTSTDISSLYAKAQHVARRHYGCNIVRTEYYKELAARIVVAAVARAAARCNKGIEVLFAVALEHFVLVVVRVLRGPTSADETAKKIQYLIHCQWCEERIFQKDGNMVEENPYRQLPCNCHGSMPGKTAIELGPLWSSSLFNTGFLKRMLFESLHHGLDDIQTLIKTLIFESECTPQSQFSIHASSNVNKQEENGVFIKTTDDTTTDNYIAQGKRKSNEMITNLGKKQKTDVSTEHPPFYYNIHRHSIKGMNMPKLKKFLCYLSQAGFRVSRTHFDPMGVRTDAPLMQFKSILLKYSTPTYTGGQSESHVQSASEDTVTERVEMSVNDKAEASGCRRW.

The span at 1–18 (MENMAEEELLPLEKEEVE) shows a compositional bias: acidic residues. Residues 1 to 78 (MENMAEEELL…LASAPEEAKS (78 aa)) form a disordered region. Position 26 is a phosphothreonine (Thr26). Low complexity-rich tracts occupy residues 39 to 49 (PDSALDSAPTP) and 57 to 73 (PALA…ASAP). Position 66 is a phosphoserine (Ser66). Positions 135-139 (HKLRR) match the Nucleolar localization signal motif. The C2H2-type zinc-finger motif lies at 184–206 (YHCIICSATITRRTDMLGHVRRH). Residues 227–688 (EILKEADTDV…APLMQFKSIL (462 aa)) enclose the Trm1 methyltransferase domain. S-adenosyl-L-methionine is bound by residues Arg260, Asp307, Asp357, and Ala358. Zn(2+) is bound by residues Cys488, Cys491, Cys513, and Cys515. Residue Lys585 forms a Glycyl lysine isopeptide (Lys-Gly) (interchain with G-Cter in SUMO2) linkage. Phosphoserine occurs at positions 612 and 707.

Belongs to the class I-like SAM-binding methyltransferase superfamily. Trm1 family. Widely expressed.

Its subcellular location is the nucleus. The protein localises to the nucleolus. It carries out the reaction guanosine(27) in tRNA(Tyr) + 2 S-adenosyl-L-methionine = N(2)-dimethylguanosine(27) in tRNA(Tyr) + 2 S-adenosyl-L-homocysteine + 2 H(+). Specifically dimethylates a single guanine residue at position 27 of tRNA(Tyr) using S-adenosyl-L-methionine as donor of the methyl groups. Dimethylation at position 27 of tRNA(Tyr) is required for efficient translation of tyrosine codons. Also required to maintain 3-(3-amino-3-carboxypropyl)uridine (acp3U) in the D-loop of several cytoplasmic tRNAs. This Homo sapiens (Human) protein is tRNA (guanine(27)-N(2))-dimethyltransferase.